Reading from the N-terminus, the 492-residue chain is N-succinylglutamate 5-semialdehyde dehydrogenase (492 aa).

220-225 (GRANTG) contributes to the NAD(+) binding site. Residues Glu243 and Cys277 contribute to the active site.

It belongs to the aldehyde dehydrogenase family. AstD subfamily.

It catalyses the reaction N-succinyl-L-glutamate 5-semialdehyde + NAD(+) + H2O = N-succinyl-L-glutamate + NADH + 2 H(+). It participates in amino-acid degradation; L-arginine degradation via AST pathway; L-glutamate and succinate from L-arginine: step 4/5. Its function is as follows. Catalyzes the NAD-dependent reduction of succinylglutamate semialdehyde into succinylglutamate. The polypeptide is N-succinylglutamate 5-semialdehyde dehydrogenase (Shigella boydii serotype 18 (strain CDC 3083-94 / BS512)).